A 450-amino-acid chain; its full sequence is Probable ECA polymerase (450 aa).

11 helical membrane-spanning segments follow: residues F6–F26, V37–L57, V63–A83, V118–L138, G155–L175, A181–G201, I207–W227, M228–Y248, L341–I361, Y378–A398, and V410–F430.

Belongs to the WzyE family. As to quaternary structure, probably part of a complex composed of WzxE, WzyE and WzzE.

The protein resides in the cell inner membrane. It participates in bacterial outer membrane biogenesis; enterobacterial common antigen biosynthesis. In terms of biological role, probably involved in the polymerization of enterobacterial common antigen (ECA) trisaccharide repeat units. The chain is Probable ECA polymerase from Escherichia fergusonii (strain ATCC 35469 / DSM 13698 / CCUG 18766 / IAM 14443 / JCM 21226 / LMG 7866 / NBRC 102419 / NCTC 12128 / CDC 0568-73).